Consider the following 227-residue polypeptide: Thymidine kinase 1 (227 aa).

Residues 15 to 22 (GPMFSGKT), 47 to 49 (DTR), and 91 to 94 (DEGQ) each bind ATP. Glu-92 functions as the Proton acceptor in the catalytic mechanism. Residue Phe-122 coordinates substrate. Residues Cys-147 and Cys-150 each coordinate Zn(2+). Substrate is bound by residues 166-170 (IELIG) and Tyr-175. Residues Cys-179 and Cys-182 each coordinate Zn(2+). Positions 187–196 (QNEGNSTKPS) are enriched in polar residues. The tract at residues 187-227 (QNEGNSTKPSKTARHSHSQSAPSVAPLAVNINPDDHLNNDY) is disordered.

Belongs to the thymidine kinase family. Interacts with calmodulin in the presence of Ca(2+).

The catalysed reaction is thymidine + ATP = dTMP + ADP + H(+). The protein is Thymidine kinase 1 of Dictyostelium discoideum (Social amoeba).